The sequence spans 464 residues: Protein FAM90A10 (464 aa).

Disordered regions lie at residues 1–42, 69–373, and 415–437; these read MMAR…DPRL, VPAT…LPTA, and HSPE…SEAP. Basic and acidic residues-rich tracts occupy residues 74–89 and 97–114; these read GKKE…KPRG and NKDK…DPQR. Over residues 180–197 the composition is skewed to low complexity; the sequence is LASLSPLRKASLSSSSSL.

The protein belongs to the FAM90 family.

In Homo sapiens (Human), this protein is Protein FAM90A10 (FAM90A10).